The following is a 799-amino-acid chain: Phenylalanine--tRNA ligase beta subunit (799 aa).

The region spanning 40–147 is the tRNA-binding domain; it reads KSHLSSVITV…KDTTLGISVR (108 aa). The B5 domain maps to 402-479; that stretch reads SKTVTIETNL…RTIGYASIRT (78 aa). Residues aspartate 457, aspartate 463, glutamate 466, and glutamate 467 each contribute to the Mg(2+) site. The FDX-ACB domain occupies 707–799; the sequence is SHFPQGQLDL…TAKSNGYSLR (93 aa).

Belongs to the phenylalanyl-tRNA synthetase beta subunit family. Type 1 subfamily. As to quaternary structure, tetramer of two alpha and two beta subunits. Mg(2+) is required as a cofactor.

The protein localises to the cytoplasm. It carries out the reaction tRNA(Phe) + L-phenylalanine + ATP = L-phenylalanyl-tRNA(Phe) + AMP + diphosphate + H(+). This is Phenylalanine--tRNA ligase beta subunit from Leptospira biflexa serovar Patoc (strain Patoc 1 / Ames).